The following is a 97-amino-acid chain: Co-chaperonin GroES (97 aa).

It belongs to the GroES chaperonin family. In terms of assembly, heptamer of 7 subunits arranged in a ring. Interacts with the chaperonin GroEL.

Its subcellular location is the cytoplasm. Functionally, together with the chaperonin GroEL, plays an essential role in assisting protein folding. The GroEL-GroES system forms a nano-cage that allows encapsulation of the non-native substrate proteins and provides a physical environment optimized to promote and accelerate protein folding. GroES binds to the apical surface of the GroEL ring, thereby capping the opening of the GroEL channel. The chain is Co-chaperonin GroES from Edwardsiella ictaluri (strain 93-146).